The following is a 309-amino-acid chain: Dioxygenase af480 (309 aa).

Fe cation is bound by residues H153, D155, and H228.

The protein belongs to the PhyH family. The cofactor is Fe cation.

The catalysed reaction is 5-dehydro-6-demethoxyfumagillol + 2-oxoglutarate + O2 = 5-dehydro-6-demethoxy-6-hydroxyfumagillol + succinate + CO2. Its pathway is secondary metabolite biosynthesis; terpenoid biosynthesis. Dioxygenase; part of the gene cluster that mediates the biosynthesis of fumagillin, a meroterpenoid that has numerous biological activities including irreversible inhibition of human type 2 methionine aminopeptidase (METAP2). Within the pathway, the dioxygenase af480 acts as a 5-dehydro-6-demethoxyfumagillol dioxygenase that hydroylates 5-keto-demethoxyfumagillol at position C-6. The pathway begins with the conversion of farnesyl pyrophosphate (FPP) to beta-trans-bergamotene by the membrane-bound beta-trans-bergamotene synthase af520. The multifunctional cytochrome P450 monooxygenase af510 then converts beta-trans-bergamotene into 5-keto-demethoxyfumagillol via several oxydation steps. 5-keto-demethoxyfumagillol is then subjected to successive C-6 hydroxylation and O-methylation by the dioxygenase af480 and O-methyltransferase af390-400, respectively, to yield 5-keto-fumagillol, which is then stereoselectively reduced by the keto-reductase af490 to 5R-hydroxy-seco-sesquiterpene. The next step is the polyketide transferase af380-catalyzed transfer of a dodecapentaenoyl group synthesized by the polyketide synthase af370 onto 5R-hydroxy-seco-sesquiterpene which leads to the production of prefumagillin. Finally, oxidative cleavage by the monooxygenase af470 converts prefumagillin to fumagillin. The sequence is that of Dioxygenase af480 from Aspergillus fumigatus (strain ATCC MYA-4609 / CBS 101355 / FGSC A1100 / Af293) (Neosartorya fumigata).